Consider the following 1436-residue polypeptide: MGARASVLSGGKLDAWEKIRLRPGGRKKYRLKHLVWASRELERFALNPDLLETADGCQQILGQLQPALKTGTEDLQSLYNTIAVLYCVHQRIDVKDTKEALGKIEEIQNKNKQRTQQAPAAADKEKDSKISQNYPIVQNAQGQMVHQAISPRTLNAWVKVVEEKAFSPEVIPMFSALSEGATPQDLNAMLNTVGGHQAAMQMLKDTINEEAAEWDRLHPVHAGPIPPGQMREPRGSDIAGTTSTLQEQVAWMTGNPPIPVGDIYKRWIILGLNKIVRMYSPVSILDIKQGPKEPFRDYVDRFFRVLRAEQATQDVKNWMTDTLLVQNANPDCRTILKALGRGASIEEMMTACQGVGGPSHKARVLAEAMSQVTNASAAIMMQKGNFKGPRRTVKCSNCGKEGHIARNCRAPRKKGCWKCGQEGHQMKDCTGRQANFFRENLAFQQGKAREFPPEEARANSPTSRELRVRRGDHPLSEAGAERTGTSFNFPQITLWQRPIVTVKIEGQLKEALLDTGADDTVLEDINLPGKWKPKMIGGIGGFIKVRQYEQVAIEIFGKKAIGTVLVGPTPVNIIGRNILTQMGCTLNLPISPIETVPVTLKPGMDGPKVKQWPLTEEKIKALTEICLEMEKEGKISKIGPENPYNTPIFAIKKKNSTRWRKLVDFRELNKRTQDFWEVQLGIPHPAGLKKKKSVSVLDVGGAYFSVPLHEDFRKYTAFTIPSTNNETPGIRYQYNVLPQGWKGSPAIFQSSMTKILEPFRKQNPEVIIYQYMDDLYVGSDLEIGQHREKIEELRAHLLRWGFTTPDQKHQKEPPFLWMGYELHPDKWTVQPVKLPEKDSWTVNDIQKLVGKLNWASQIYPGIKVKQLCXLLRGAKALTEIVPLTKEAELELAENREILKEPVHGAYYDPSKELIAEIQKQGPDQWTYQIYQEPFKNLKTGKYAKMRSAHTNDVKQLTEVVQKIATESIVIWGKIPKFRLPIQKETWETWWTEHWQATWIPEWEFVNTPHLVKLWYQLETEPIEGAETYYVDGAANRETKMGKAGYVTDRGKQKIVSLTETTNQKTELQAIYLALQESGPEVNIVTDSQYALGIIQAQPDKSESELVNQIIEELIKKEKFYLSWVPAHKGIGGNEQVDKLVSSGIRKVLFLDGIDKAQVQHEKYHSNWRAMASDFNLPPIVAKEIVASCDKCQLKGEAMHGQVDCSPGIWQLDCTHLEGKIILVAVHVASGYIEAEVIPAETGQETAYFILKLAGRWPVKMIHTDNGSNFTSAAVKAACWWADIHQEFGIPYNPQSQGVVESMNKELKKIIGQVRDQAEHLRTAVQMAVFIHNFKRKGGIGGYSARERIIDIIATDIPTKELQKQISQIQKFRVYYRDSRDPIWKGPAKLLWKGEGAVVIQDNSEIKVVPRRKAKIIRDYGKQMAGDDCVAGRQDED.

A lipid anchor (N-myristoyl glycine; by host) is attached at glycine 2. Positions 7–31 are interaction with Gp41; the sequence is VLSGGKLDAWEKIRLRPGGRKKYRL. The segment at 8-43 is interaction with host CALM1; that stretch reads LSGGKLDAWEKIRLRPGGRKKYRLKHLVWASRELER. The tract at residues 12 to 19 is interaction with host AP3D1; that stretch reads KLDAWEKI. Residues 14-33 are interaction with membrane phosphatidylinositol 4,5-bisphosphate and RNA; that stretch reads DAWEKIRLRPGGRKKYRLKH. Positions 16-22 match the Nuclear export signal motif; the sequence is WEKIRLR. The Nuclear localization signal motif lies at 26 to 32; that stretch reads RKKYRLK. The segment at 73–77 is interaction with membrane phosphatidylinositol 4,5-bisphosphate; the sequence is EDLQS. Residues 110-129 form a disordered region; sequence KNKQRTQQAPAAADKEKDSK. Tyrosine 134 carries the post-translational modification Phosphotyrosine; by host. The tract at residues 191–229 is interaction with human PPIA/CYPA and NUP153; sequence NTVGGHQAAMQMLKDTINEEAAEWDRLHPVHAGPIPPGQ. The dimerization/Multimerization of capsid protein p24 stretch occupies residues 279-365; sequence YSPVSILDIK…GGPSHKARVL (87 aa). 2 CCHC-type zinc fingers span residues 393–410 and 414–431; these read VKCS…NCRA and KGCW…DCTG. Basic and acidic residues-rich tracts occupy residues 447-457 and 464-475; these read KAREFPPEEAR and RELRVRRGDHPL. The tract at residues 447–482 is disordered; it reads KAREFPPEEARANSPTSRELRVRRGDHPLSEAGAER. The dimerization of protease stretch occupies residues 490 to 494; that stretch reads PQITL. One can recognise a Peptidase A2 domain in the interval 509-578; it reads KEALLDTGAD…TPVNIIGRNI (70 aa). The active-site For protease activity; shared with dimeric partner is aspartate 514. Dimerization of protease stretches follow at residues 538-544 and 577-589; these read GIGGFIK and NILT…LNLP. The Reverse transcriptase domain maps to 632 to 822; it reads EGKISKIGPE…PPFLWMGYEL (191 aa). Mg(2+) is bound by residues aspartate 698, aspartate 773, and aspartate 774. Residues 815-823 form an RT 'primer grip' region; that stretch reads FLWMGYELH. The Tryptophan repeat motif motif lies at 986 to 1002; sequence WETWWTEHWQATWIPEW. Residues 1022 to 1145 enclose the RNase H type-1 domain; the sequence is IEGAETYYVD…VDKLVSSGIR (124 aa). Residues aspartate 1031, glutamate 1066, aspartate 1086, and aspartate 1137 each coordinate Mg(2+). The Integrase-type zinc finger occupies 1151–1192; sequence DGIDKAQVQHEKYHSNWRAMASDFNLPPIVAKEIVASCDKCQ. Zn(2+) contacts are provided by histidine 1160, histidine 1164, cysteine 1188, and cysteine 1191. Residues 1202 to 1352 form the Integrase catalytic domain; that stretch reads VDCSPGIWQL…SARERIIDII (151 aa). Residues aspartate 1212, aspartate 1264, and glutamate 1300 each contribute to the Mg(2+) site. Residues 1371–1418 constitute a DNA-binding region (integrase-type); sequence FRVYYRDSRDPIWKGPAKLLWKGEGAVVIQDNSEIKVVPRRKAKIIRD.

As to quaternary structure, homotrimer; further assembles as hexamers of trimers. Interacts with gp41 (via C-terminus). Interacts with host CALM1; this interaction induces a conformational change in the Matrix protein, triggering exposure of the myristate group. Interacts with host AP3D1; this interaction allows the polyprotein trafficking to multivesicular bodies during virus assembly. Part of the pre-integration complex (PIC) which is composed of viral genome, matrix protein, Vpr and integrase. In terms of assembly, homodimer; the homodimer further multimerizes as homohexamers or homopentamers. Interacts with human PPIA/CYPA; This interaction stabilizes the capsid. Interacts with human NUP153. Interacts with host PDZD8; this interaction stabilizes the capsid. Interacts with monkey TRIM5; this interaction destabilizes the capsid. Homodimer, whose active site consists of two apposed aspartic acid residues. As to quaternary structure, heterodimer of p66 RT and p51 RT (RT p66/p51). Heterodimerization of RT is essential for DNA polymerase activity. The overall folding of the subdomains is similar in p66 RT and p51 RT but the spatial arrangements of the subdomains are dramatically different. In terms of assembly, homotetramer; may further associate as a homohexadecamer. Part of the pre-integration complex (PIC) which is composed of viral genome, matrix protein, Vpr and integrase. Interacts with human SMARCB1/INI1 and human PSIP1/LEDGF isoform 1. Interacts with human KPNA3; this interaction might play a role in nuclear import of the pre-integration complex. Interacts with human NUP153; this interaction might play a role in nuclear import of the pre-integration complex. Requires Mg(2+) as cofactor. In terms of processing, specific enzymatic cleavages by the viral protease yield mature proteins. The protease is released by autocatalytic cleavage. The polyprotein is cleaved during and after budding, this process is termed maturation. Proteolytic cleavage of p66 RT removes the RNase H domain to yield the p51 RT subunit. Nucleocapsid protein p7 might be further cleaved after virus entry. Tyrosine phosphorylated presumably in the virion by a host kinase. Phosphorylation is apparently not a major regulator of membrane association. Post-translationally, phosphorylated possibly by host MAPK1; this phosphorylation is necessary for Pin1-mediated virion uncoating. In terms of processing, methylated by host PRMT6, impairing its function by reducing RNA annealing and the initiation of reverse transcription.

The protein localises to the host cell membrane. Its subcellular location is the host endosome. It is found in the host multivesicular body. The protein resides in the virion membrane. It localises to the host nucleus. The protein localises to the host cytoplasm. Its subcellular location is the virion. The catalysed reaction is Specific for a P1 residue that is hydrophobic, and P1' variable, but often Pro.. It catalyses the reaction Endohydrolysis of RNA in RNA/DNA hybrids. Three different cleavage modes: 1. sequence-specific internal cleavage of RNA. Human immunodeficiency virus type 1 and Moloney murine leukemia virus enzymes prefer to cleave the RNA strand one nucleotide away from the RNA-DNA junction. 2. RNA 5'-end directed cleavage 13-19 nucleotides from the RNA end. 3. DNA 3'-end directed cleavage 15-20 nucleotides away from the primer terminus.. The enzyme catalyses 3'-end directed exonucleolytic cleavage of viral RNA-DNA hybrid.. It carries out the reaction DNA(n) + a 2'-deoxyribonucleoside 5'-triphosphate = DNA(n+1) + diphosphate. Its activity is regulated as follows. Protease: The viral protease is inhibited by many synthetic protease inhibitors (PIs), such as amprenavir, atazanavir, indinavir, loprinavir, nelfinavir, ritonavir and saquinavir. Use of protease inhibitors in tritherapy regimens permit more ambitious therapeutic strategies. Reverse transcriptase/ribonuclease H: RT can be inhibited either by nucleoside RT inhibitors (NRTIs) or by non nucleoside RT inhibitors (NNRTIs). NRTIs act as chain terminators, whereas NNRTIs inhibit DNA polymerization by binding a small hydrophobic pocket near the RT active site and inducing an allosteric change in this region. Classical NRTIs are abacavir, adefovir (PMEA), didanosine (ddI), lamivudine (3TC), stavudine (d4T), tenofovir (PMPA), zalcitabine (ddC), and zidovudine (AZT). Classical NNRTIs are atevirdine (BHAP U-87201E), delavirdine, efavirenz (DMP-266), emivirine (I-EBU), and nevirapine (BI-RG-587). The tritherapies used as a basic effective treatment of AIDS associate two NRTIs and one NNRTI. Its function is as follows. Mediates, with Gag polyprotein, the essential events in virion assembly, including binding the plasma membrane, making the protein-protein interactions necessary to create spherical particles, recruiting the viral Env proteins, and packaging the genomic RNA via direct interactions with the RNA packaging sequence (Psi). Gag-Pol polyprotein may regulate its own translation, by the binding genomic RNA in the 5'-UTR. At low concentration, the polyprotein would promote translation, whereas at high concentration, the polyprotein would encapsidate genomic RNA and then shut off translation. Functionally, targets the polyprotein to the plasma membrane via a multipartite membrane-binding signal, that includes its myristoylated N-terminus. Matrix protein is part of the pre-integration complex. Implicated in the release from host cell mediated by Vpu. Binds to RNA. In terms of biological role, forms the conical core that encapsulates the genomic RNA-nucleocapsid complex in the virion. Most core are conical, with only 7% tubular. The core is constituted by capsid protein hexamer subunits. The core is disassembled soon after virion entry. Host restriction factors such as TRIM5-alpha or TRIMCyp bind retroviral capsids and cause premature capsid disassembly, leading to blocks in reverse transcription. Capsid restriction by TRIM5 is one of the factors which restricts HIV-1 to the human species. Host PIN1 apparently facilitates the virion uncoating. On the other hand, interactions with PDZD8 or CYPA stabilize the capsid. Encapsulates and protects viral dimeric unspliced genomic RNA (gRNA). Binds these RNAs through its zinc fingers. Acts as a nucleic acid chaperone which is involved in rearangement of nucleic acid secondary structure during gRNA retrotranscription. Also facilitates template switch leading to recombination. As part of the polyprotein, participates in gRNA dimerization, packaging, tRNA incorporation and virion assembly. Its function is as follows. Aspartyl protease that mediates proteolytic cleavages of Gag and Gag-Pol polyproteins during or shortly after the release of the virion from the plasma membrane. Cleavages take place as an ordered, step-wise cascade to yield mature proteins. This process is called maturation. Displays maximal activity during the budding process just prior to particle release from the cell. Also cleaves Nef and Vif, probably concomitantly with viral structural proteins on maturation of virus particles. Hydrolyzes host EIF4GI and PABP1 in order to shut off the capped cellular mRNA translation. The resulting inhibition of cellular protein synthesis serves to ensure maximal viral gene expression and to evade host immune response. Also mediates cleavage of host YTHDF3. Mediates cleavage of host CARD8, thereby activating the CARD8 inflammasome, leading to the clearance of latent HIV-1 in patient CD4(+) T-cells after viral reactivation; in contrast, HIV-1 can evade CARD8-sensing when its protease remains inactive in infected cells prior to viral budding. Functionally, multifunctional enzyme that converts the viral RNA genome into dsDNA in the cytoplasm, shortly after virus entry into the cell. This enzyme displays a DNA polymerase activity that can copy either DNA or RNA templates, and a ribonuclease H (RNase H) activity that cleaves the RNA strand of RNA-DNA heteroduplexes in a partially processive 3' to 5' endonucleasic mode. Conversion of viral genomic RNA into dsDNA requires many steps. A tRNA(3)-Lys binds to the primer-binding site (PBS) situated at the 5'-end of the viral RNA. RT uses the 3' end of the tRNA primer to perform a short round of RNA-dependent minus-strand DNA synthesis. The reading proceeds through the U5 region and ends after the repeated (R) region which is present at both ends of viral RNA. The portion of the RNA-DNA heteroduplex is digested by the RNase H, resulting in a ssDNA product attached to the tRNA primer. This ssDNA/tRNA hybridizes with the identical R region situated at the 3' end of viral RNA. This template exchange, known as minus-strand DNA strong stop transfer, can be either intra- or intermolecular. RT uses the 3' end of this newly synthesized short ssDNA to perform the RNA-dependent minus-strand DNA synthesis of the whole template. RNase H digests the RNA template except for two polypurine tracts (PPTs) situated at the 5'-end and near the center of the genome. It is not clear if both polymerase and RNase H activities are simultaneous. RNase H probably can proceed both in a polymerase-dependent (RNA cut into small fragments by the same RT performing DNA synthesis) and a polymerase-independent mode (cleavage of remaining RNA fragments by free RTs). Secondly, RT performs DNA-directed plus-strand DNA synthesis using the PPTs that have not been removed by RNase H as primers. PPTs and tRNA primers are then removed by RNase H. The 3' and 5' ssDNA PBS regions hybridize to form a circular dsDNA intermediate. Strand displacement synthesis by RT to the PBS and PPT ends produces a blunt ended, linear dsDNA copy of the viral genome that includes long terminal repeats (LTRs) at both ends. In terms of biological role, catalyzes viral DNA integration into the host chromosome, by performing a series of DNA cutting and joining reactions. This enzyme activity takes place after virion entry into a cell and reverse transcription of the RNA genome in dsDNA. The first step in the integration process is 3' processing. This step requires a complex comprising the viral genome, matrix protein, Vpr and integrase. This complex is called the pre-integration complex (PIC). The integrase protein removes 2 nucleotides from each 3' end of the viral DNA, leaving recessed CA OH's at the 3' ends. In the second step, the PIC enters cell nucleus. This process is mediated through integrase and Vpr proteins, and allows the virus to infect a non dividing cell. This ability to enter the nucleus is specific of lentiviruses, other retroviruses cannot and rely on cell division to access cell chromosomes. In the third step, termed strand transfer, the integrase protein joins the previously processed 3' ends to the 5' ends of strands of target cellular DNA at the site of integration. The 5'-ends are produced by integrase-catalyzed staggered cuts, 5 bp apart. A Y-shaped, gapped, recombination intermediate results, with the 5'-ends of the viral DNA strands and the 3' ends of target DNA strands remaining unjoined, flanking a gap of 5 bp. The last step is viral DNA integration into host chromosome. This involves host DNA repair synthesis in which the 5 bp gaps between the unjoined strands are filled in and then ligated. Since this process occurs at both cuts flanking the HIV genome, a 5 bp duplication of host DNA is produced at the ends of HIV-1 integration. Alternatively, Integrase may catalyze the excision of viral DNA just after strand transfer, this is termed disintegration. This is Gag-Pol polyprotein (gag-pol) from Human immunodeficiency virus type 1 group M subtype H (isolate VI991) (HIV-1).